The chain runs to 113 residues: Ribosome-binding factor A (113 aa).

This sequence belongs to the RbfA family. Monomer. Binds 30S ribosomal subunits, but not 50S ribosomal subunits or 70S ribosomes.

The protein localises to the cytoplasm. Functionally, one of several proteins that assist in the late maturation steps of the functional core of the 30S ribosomal subunit. Associates with free 30S ribosomal subunits (but not with 30S subunits that are part of 70S ribosomes or polysomes). Required for efficient processing of 16S rRNA. May interact with the 5'-terminal helix region of 16S rRNA. This Oceanobacillus iheyensis (strain DSM 14371 / CIP 107618 / JCM 11309 / KCTC 3954 / HTE831) protein is Ribosome-binding factor A.